Here is a 213-residue protein sequence, read N- to C-terminus: Outer-membrane lipoprotein carrier protein (213 aa).

The signal sequence occupies residues 1-23 (MKKLLKQSLLGFALVSMTGAAFA).

The protein belongs to the LolA family. Monomer.

The protein resides in the periplasm. Functionally, participates in the translocation of lipoproteins from the inner membrane to the outer membrane. Only forms a complex with a lipoprotein if the residue after the N-terminal Cys is not an aspartate (The Asp acts as a targeting signal to indicate that the lipoprotein should stay in the inner membrane). The protein is Outer-membrane lipoprotein carrier protein of Actinobacillus pleuropneumoniae serotype 7 (strain AP76).